We begin with the raw amino-acid sequence, 101 residues long: MPNSTPQSQLIRAHVFVTGRVQGVGFRYSTVDTASQLGLTGWVRNLPDGRVEAVFEGVRDIVEDMVRWCHAGPPAAVVQDVAVEYEEPEGLRGFEVKRLVK.

The Acylphosphatase-like domain occupies 12 to 98; that stretch reads RAHVFVTGRV…EGLRGFEVKR (87 aa). Active-site residues include Arg27 and Asn45.

The protein belongs to the acylphosphatase family.

The enzyme catalyses an acyl phosphate + H2O = a carboxylate + phosphate + H(+). The sequence is that of Acylphosphatase (acyP) from Nostoc sp. (strain PCC 7120 / SAG 25.82 / UTEX 2576).